The primary structure comprises 56 residues: Ovomucoid (56 aa).

One can recognise a Kazal-like domain in the interval 6 to 56 (VDCSEYPKPACTLEYRPLCGSDNKTYANKCNFCNAVVESNGTLTLSHFGKC). 3 cysteine pairs are disulfide-bonded: Cys8–Cys38, Cys16–Cys35, and Cys24–Cys56. The N-linked (GlcNAc...) asparagine glycan is linked to Asn45.

Its subcellular location is the secreted. This Callipepla californica (California quail) protein is Ovomucoid.